A 264-amino-acid chain; its full sequence is Thiazole synthase (264 aa).

Residue lysine 106 is the Schiff-base intermediate with DXP of the active site. 1-deoxy-D-xylulose 5-phosphate contacts are provided by residues glycine 167, 193–194 (AG), and 215–216 (NS).

It belongs to the ThiG family. As to quaternary structure, homotetramer. Forms heterodimers with either ThiH or ThiS.

It is found in the cytoplasm. The enzyme catalyses [ThiS sulfur-carrier protein]-C-terminal-Gly-aminoethanethioate + 2-iminoacetate + 1-deoxy-D-xylulose 5-phosphate = [ThiS sulfur-carrier protein]-C-terminal Gly-Gly + 2-[(2R,5Z)-2-carboxy-4-methylthiazol-5(2H)-ylidene]ethyl phosphate + 2 H2O + H(+). It functions in the pathway cofactor biosynthesis; thiamine diphosphate biosynthesis. Functionally, catalyzes the rearrangement of 1-deoxy-D-xylulose 5-phosphate (DXP) to produce the thiazole phosphate moiety of thiamine. Sulfur is provided by the thiocarboxylate moiety of the carrier protein ThiS. In vitro, sulfur can be provided by H(2)S. The protein is Thiazole synthase of Prochlorococcus marinus (strain AS9601).